We begin with the raw amino-acid sequence, 336 residues long: Holliday junction branch migration complex subunit RuvB (336 aa).

The segment at 1–185 is large ATPase domain (RuvB-L); the sequence is MSIIVERLLS…FGVLSRVEYY (185 aa). ATP-binding positions include L24, R25, G66, K69, T70, T71, 132–134, R175, Y185, and R222; that span reads EDF. Residue T70 coordinates Mg(2+). A small ATPAse domain (RuvB-S) region spans residues 186-256; the sequence is TVDQLSAIVE…ITQMALELLQ (71 aa). Residues 259–336 form a head domain (RuvB-H) region; it reads KLGLDHIDHK…EHFGMEIPKV (78 aa). R314 and R319 together coordinate DNA.

Belongs to the RuvB family. As to quaternary structure, homohexamer. Forms an RuvA(8)-RuvB(12)-Holliday junction (HJ) complex. HJ DNA is sandwiched between 2 RuvA tetramers; dsDNA enters through RuvA and exits via RuvB. An RuvB hexamer assembles on each DNA strand where it exits the tetramer. Each RuvB hexamer is contacted by two RuvA subunits (via domain III) on 2 adjacent RuvB subunits; this complex drives branch migration. In the full resolvosome a probable DNA-RuvA(4)-RuvB(12)-RuvC(2) complex forms which resolves the HJ.

The protein resides in the cytoplasm. It carries out the reaction ATP + H2O = ADP + phosphate + H(+). In terms of biological role, the RuvA-RuvB-RuvC complex processes Holliday junction (HJ) DNA during genetic recombination and DNA repair, while the RuvA-RuvB complex plays an important role in the rescue of blocked DNA replication forks via replication fork reversal (RFR). RuvA specifically binds to HJ cruciform DNA, conferring on it an open structure. The RuvB hexamer acts as an ATP-dependent pump, pulling dsDNA into and through the RuvAB complex. RuvB forms 2 homohexamers on either side of HJ DNA bound by 1 or 2 RuvA tetramers; 4 subunits per hexamer contact DNA at a time. Coordinated motions by a converter formed by DNA-disengaged RuvB subunits stimulates ATP hydrolysis and nucleotide exchange. Immobilization of the converter enables RuvB to convert the ATP-contained energy into a lever motion, pulling 2 nucleotides of DNA out of the RuvA tetramer per ATP hydrolyzed, thus driving DNA branch migration. The RuvB motors rotate together with the DNA substrate, which together with the progressing nucleotide cycle form the mechanistic basis for DNA recombination by continuous HJ branch migration. Branch migration allows RuvC to scan DNA until it finds its consensus sequence, where it cleaves and resolves cruciform DNA. In Bacillus cereus (strain ATCC 14579 / DSM 31 / CCUG 7414 / JCM 2152 / NBRC 15305 / NCIMB 9373 / NCTC 2599 / NRRL B-3711), this protein is Holliday junction branch migration complex subunit RuvB.